Reading from the N-terminus, the 196-residue chain is NADH dehydrogenase [ubiquinone] 1 alpha subcomplex assembly factor 3 (196 aa).

Residues 1 to 93 (MIARTLRTVG…RSVLSWNVNS (93 aa)) constitute a mitochondrion transit peptide.

The protein belongs to the NDUFAF3 family. In terms of assembly, together with NdufAF4 associates with mitochondrial complex I assembly intermediates during its biogenesis.

It is found in the mitochondrion. In terms of biological role, involved in the assembly of mitochondrial NADH:ubiquinone oxidoreductase complex (complex I). Together with NdufAF4, involved in biogenesis of complex 1 modules N, Q and P-peripheral, but not the P-distal module. Required for recruitment of the complex I assembly factor Timmdc1 to complex 1 assembly intermediates. This Drosophila melanogaster (Fruit fly) protein is NADH dehydrogenase [ubiquinone] 1 alpha subcomplex assembly factor 3.